The primary structure comprises 1173 residues: Pumilio homolog 2 (1173 aa).

Disordered regions lie at residues 41–68 (VSSAGQAHGNNPHAMPPGAPSAQVPLSG), 265–296 (VSKLNGRGLPNGIESDCKDFNRTPGSRQASPT), 480–518 (QQAATQASQGQQQVMRATSNQRPLTPNQAQQGQQPESLA), 592–662 (LTGA…SLGF), and 730–759 (PISMPLPSQTSGHSLTPPPSLSSHGSSSSL). Residues 287 to 296 (TPGSRQASPT) are compositionally biased toward polar residues. The segment covering 480 to 492 (QQAATQASQGQQQ) has biased composition (low complexity). The span at 493-518 (VMRATSNQRPLTPNQAQQGQQPESLA) shows a compositional bias: polar residues. Residues 606-622 (QQQQQQQQQQHQQQQQQ) are compositionally biased toward low complexity. Positions 623–633 (PNANLHSNSFY) are enriched in polar residues. Over residues 634 to 657 (GNSTMSNNSQSSSLFSPGPGQPGS) the composition is skewed to low complexity. Residues 815–1155 (GRSRLLEDFR…HILAKLEKYY (341 aa)) form the PUM-HD domain. Pumilio repeat units follow at residues 835-870 (DLMGHIVEFSQDQHGSRFIQQKLERASPAERQLVFS), 871-906 (EILQAAYQLMTDVFGNYVIQKFFEFGSMDQKLALAT), 907-942 (RIRGHVLPLALQMYGCRVIQKALESISTDQQSEMVR), 943-978 (ELDGHVLKCVKDQNGNHVVQKCIECVTPQSLHFIIE), 979-1014 (AFKGQVYVLSTHPYGCRVIQRILEHCTPEQTLPILE), 1015-1050 (ELHQSTEQLVQDQYGNYVIQHVLEHGRSDDKSKIVC), 1051-1086 (EVRGQVLVLSQHKFASNVVEKCVTHSSRTERAFLID), 1087-1129 (EICC…IIMH), and 1130-1167 (KIRPHITTLRKYTYGKHILAKLEKYYMKNSPDLGLLVG). The adenine-nucleotide binding in RNA target stretch occupies residues 850–854 (SRFIQ). The uracil-nucleotide binding in RNA target stretch occupies residues 886 to 890 (NYVIQ). Positions 922–926 (CRVIQ) are adenine-nucleotide binding in RNA target. The non-specific-nucleotide binding in RNA target stretch occupies residues 958–962 (NHVVQ). The tract at residues 994-998 (CRVIQ) is adenine-nucleotide binding in RNA target. The segment at 1030 to 1034 (NYVIQ) is uracil-nucleotide binding in RNA target. Residues 1066–1070 (SNVVE) form a guanine-nucleotide binding in RNA target region. The segment at 1109-1113 (NYVVQ) is uracil-nucleotide binding in RNA target.

Component of a complex with papd4, sympk, tacc3, parn, dazl and cpeb1. In terms of processing, phosphorylated.

It is found in the cytoplasm. The protein resides in the P-body. Its subcellular location is the cytoplasmic granule. In terms of biological role, sequence-specific RNA-binding protein that acts as a post-transcriptional repressor by binding the 3'-UTR of mRNA targets. Binds to an RNA consensus sequence, the Pumilio Response Element (PRE), 5'-UGUANAUA-3', that is related to the Nanos Response Element (NRE). Mediates post-transcriptional repression of transcripts via different mechanisms: acts via direct recruitment of deadenylase complexes leading to translational inhibition and mRNA degradation. Also mediates deadenylation-independent repression by promoting accessibility of miRNAs. In Xenopus laevis (African clawed frog), this protein is Pumilio homolog 2 (pum2).